Consider the following 222-residue polypeptide: E3 ubiquitin-protein ligase RNF138 (222 aa).

The RING-type zinc-finger motif lies at 17 to 57 (CPVCQEILQTPVRTQTCRHVFCRKCFMLAMKSGGAYCPLCR). The Zn(2+) site is built by cysteine 85, cysteine 88, histidine 100, and cysteine 104. The C2HC RNF-type zinc finger occupies 85–104 (CMYCGKMMKLHYMKLHYKSC). 2 C2H2-type zinc fingers span residues 134–157 (YKCP…NNVH) and 164–192 (MVCP…NARH). The 19-residue stretch at 202-220 (INIDEEAQFQIAVANSYKI) folds into the UIM domain.

In terms of assembly, interacts with nlk.2 (via C-terminus) and ube2k. Post-translationally, auto-ubiquitinated.

The protein localises to the chromosome. The enzyme catalyses S-ubiquitinyl-[E2 ubiquitin-conjugating enzyme]-L-cysteine + [acceptor protein]-L-lysine = [E2 ubiquitin-conjugating enzyme]-L-cysteine + N(6)-ubiquitinyl-[acceptor protein]-L-lysine.. The protein operates within protein modification; protein ubiquitination. E3 ubiquitin-protein ligase involved in DNA damage response by promoting DNA resection and homologous recombination. Recruited to sites of double-strand breaks following DNA damage and specifically promotes double-strand break repair via homologous recombination. Together with nlk.2, involved in the ubiquitination and degradation of TCF/LEF. Also exhibits auto-ubiquitination activity in combination with ube2k. May act as a negative regulator in the Wnt/beta-catenin-mediated signaling pathway. The chain is E3 ubiquitin-protein ligase RNF138 (rnf138) from Xenopus laevis (African clawed frog).